A 310-amino-acid polypeptide reads, in one-letter code: Methionyl-tRNA formyltransferase (310 aa).

110 to 113 (SLLP) is a (6S)-5,6,7,8-tetrahydrofolate binding site.

The protein belongs to the Fmt family.

It carries out the reaction L-methionyl-tRNA(fMet) + (6R)-10-formyltetrahydrofolate = N-formyl-L-methionyl-tRNA(fMet) + (6S)-5,6,7,8-tetrahydrofolate + H(+). Attaches a formyl group to the free amino group of methionyl-tRNA(fMet). The formyl group appears to play a dual role in the initiator identity of N-formylmethionyl-tRNA by promoting its recognition by IF2 and preventing the misappropriation of this tRNA by the elongation apparatus. This Streptomyces coelicolor (strain ATCC BAA-471 / A3(2) / M145) protein is Methionyl-tRNA formyltransferase.